We begin with the raw amino-acid sequence, 436 residues long: 3-ketoacyl-CoA thiolase (436 aa).

Cys-99 acts as the Acyl-thioester intermediate in catalysis. Catalysis depends on proton acceptor residues His-392 and Cys-422.

This sequence belongs to the thiolase-like superfamily. Thiolase family. Heterotetramer of two alpha chains (FadJ) and two beta chains (FadI).

The protein resides in the cytoplasm. It carries out the reaction an acyl-CoA + acetyl-CoA = a 3-oxoacyl-CoA + CoA. It functions in the pathway lipid metabolism; fatty acid beta-oxidation. Its function is as follows. Catalyzes the final step of fatty acid oxidation in which acetyl-CoA is released and the CoA ester of a fatty acid two carbons shorter is formed. This Alteromonas mediterranea (strain DSM 17117 / CIP 110805 / LMG 28347 / Deep ecotype) protein is 3-ketoacyl-CoA thiolase.